The primary structure comprises 157 residues: Serine-protein kinase RsbW (157 aa).

The protein belongs to the anti-sigma-factor family.

It carries out the reaction L-seryl-[protein] + ATP = O-phospho-L-seryl-[protein] + ADP + H(+). The catalysed reaction is L-threonyl-[protein] + ATP = O-phospho-L-threonyl-[protein] + ADP + H(+). Negative regulator of sigma-B activity. Phosphorylates and inactivates its specific antagonist protein, RsbV. Upon phosphorylation of RsbV, RsbW is released and binds to sigma-B, thereby blocking its ability to form an RNA polymerase holoenzyme (E-sigma-B). In Listeria monocytogenes serovar 1/2a (strain ATCC BAA-679 / EGD-e), this protein is Serine-protein kinase RsbW.